The sequence spans 101 residues: NAD(P)H-quinone oxidoreductase subunit 4L, chloroplastic (101 aa).

3 helical membrane passes run Ile2 to Ile22, Met32 to Ile52, and Ile64 to Ile84.

It belongs to the complex I subunit 4L family. NDH is composed of at least 16 different subunits, 5 of which are encoded in the nucleus.

It localises to the plastid. The protein localises to the chloroplast thylakoid membrane. It carries out the reaction a plastoquinone + NADH + (n+1) H(+)(in) = a plastoquinol + NAD(+) + n H(+)(out). The enzyme catalyses a plastoquinone + NADPH + (n+1) H(+)(in) = a plastoquinol + NADP(+) + n H(+)(out). NDH shuttles electrons from NAD(P)H:plastoquinone, via FMN and iron-sulfur (Fe-S) centers, to quinones in the photosynthetic chain and possibly in a chloroplast respiratory chain. The immediate electron acceptor for the enzyme in this species is believed to be plastoquinone. Couples the redox reaction to proton translocation, and thus conserves the redox energy in a proton gradient. The chain is NAD(P)H-quinone oxidoreductase subunit 4L, chloroplastic from Chlorokybus atmophyticus (Soil alga).